Consider the following 206-residue polypeptide: Venom allergen 5 (206 aa).

4 cysteine pairs are disulfide-bonded: Cys-5/Cys-18, Cys-9/Cys-103, Cys-28/Cys-96, and Cys-172/Cys-189. Positions 47–191 constitute an SCP domain; it reads LKVHNDFRQK…WYTHYLVCNY (145 aa).

The protein belongs to the CRISP family. Venom allergen 5-like subfamily. As to expression, expressed by the venom gland.

The protein localises to the secreted. The sequence is that of Venom allergen 5 from Vespula vidua (Ground hornet).